Reading from the N-terminus, the 277-residue chain is Ubiquinone biosynthesis protein COQ4, mitochondrial (277 aa).

The transit peptide at 1–14 directs the protein to the mitochondrion; the sequence is MLTKRALRTTDPYR. H157, D158, H161, and E173 together coordinate Zn(2+).

The protein belongs to the COQ4 family. Component of a multi-subunit COQ enzyme complex, composed of at least COQ3, COQ4, COQ5, COQ6, COQ7 and COQ9. Zn(2+) serves as cofactor.

It is found in the mitochondrion inner membrane. The catalysed reaction is a 4-hydroxy-3-methoxy-5-(all-trans-polyprenyl)benzoate + H(+) = a 2-methoxy-6-(all-trans-polyprenyl)phenol + CO2. Its pathway is cofactor biosynthesis; ubiquinone biosynthesis. In terms of biological role, lyase that catalyzes the C1-decarboxylation of 4-hydroxy-3-methoxy-5-(all-trans-polyprenyl)benzoic acid into 2-methoxy-6-(all-trans-polyprenyl)phenol during ubiquinone biosynthesis. The sequence is that of Ubiquinone biosynthesis protein COQ4, mitochondrial from Ajellomyces capsulatus (strain G186AR / H82 / ATCC MYA-2454 / RMSCC 2432) (Darling's disease fungus).